The chain runs to 562 residues: NAD-dependent malic enzyme (562 aa).

Residue Tyr101 is the Proton donor of the active site. Arg154 lines the NAD(+) pocket. The Proton acceptor role is filled by Lys172. Glu243, Asp244, and Asp267 together coordinate a divalent metal cation. Residues Asp267 and Asn415 each coordinate NAD(+).

This sequence belongs to the malic enzymes family. In terms of assembly, homotetramer. Requires Mg(2+) as cofactor. Mn(2+) serves as cofactor.

It carries out the reaction (S)-malate + NAD(+) = pyruvate + CO2 + NADH. It catalyses the reaction oxaloacetate + H(+) = pyruvate + CO2. This is NAD-dependent malic enzyme from Shewanella loihica (strain ATCC BAA-1088 / PV-4).